We begin with the raw amino-acid sequence, 89 residues long: Small ribosomal subunit protein uS19 (89 aa).

It belongs to the universal ribosomal protein uS19 family.

In terms of biological role, protein S19 forms a complex with S13 that binds strongly to the 16S ribosomal RNA. The protein is Small ribosomal subunit protein uS19 of Parabacteroides distasonis (strain ATCC 8503 / DSM 20701 / CIP 104284 / JCM 5825 / NCTC 11152).